The primary structure comprises 239 residues: tRNA (guanine-N(7)-)-methyltransferase (239 aa).

S-adenosyl-L-methionine contacts are provided by E69, E94, D121, and D144. D144 is an active-site residue. Position 148 (K148) interacts with substrate. Residues 150–155 (RHNKRR) form an interaction with RNA region. Substrate contacts are provided by residues D180 and 217 to 220 (TKFE).

This sequence belongs to the class I-like SAM-binding methyltransferase superfamily. TrmB family. In terms of assembly, monomer.

The enzyme catalyses guanosine(46) in tRNA + S-adenosyl-L-methionine = N(7)-methylguanosine(46) in tRNA + S-adenosyl-L-homocysteine. The protein operates within tRNA modification; N(7)-methylguanine-tRNA biosynthesis. Catalyzes the formation of N(7)-methylguanine at position 46 (m7G46) in tRNA. The sequence is that of tRNA (guanine-N(7)-)-methyltransferase from Cronobacter sakazakii (strain ATCC BAA-894) (Enterobacter sakazakii).